A 293-amino-acid chain; its full sequence is tRNA (guanine-N(7)-)-methyltransferase (293 aa).

S-adenosyl-L-methionine contacts are provided by residues Gly105, 128-129, 163-164, and Cys183; these read EI and NT. Asp186 is an active-site residue. 261–263 provides a ligand contact to S-adenosyl-L-methionine; that stretch reads TEE.

This sequence belongs to the class I-like SAM-binding methyltransferase superfamily. TrmB family. Forms a complex with trm82.

It localises to the nucleus. The enzyme catalyses guanosine(46) in tRNA + S-adenosyl-L-methionine = N(7)-methylguanosine(46) in tRNA + S-adenosyl-L-homocysteine. It functions in the pathway tRNA modification; N(7)-methylguanine-tRNA biosynthesis. Catalyzes the formation of N(7)-methylguanine at position 46 (m7G46) in tRNA. In Neurospora crassa (strain ATCC 24698 / 74-OR23-1A / CBS 708.71 / DSM 1257 / FGSC 987), this protein is tRNA (guanine-N(7)-)-methyltransferase (trm8).